A 100-amino-acid chain; its full sequence is Integration host factor subunit alpha (100 aa).

Residues 53-72 (FDLRDKKQRPGRNPKTGEEI) are disordered.

It belongs to the bacterial histone-like protein family. As to quaternary structure, heterodimer of an alpha and a beta chain.

In terms of biological role, this protein is one of the two subunits of integration host factor, a specific DNA-binding protein that functions in genetic recombination as well as in transcriptional and translational control. In Marinobacter nauticus (strain ATCC 700491 / DSM 11845 / VT8) (Marinobacter aquaeolei), this protein is Integration host factor subunit alpha.